A 330-amino-acid chain; its full sequence is Malate dehydrogenase (330 aa).

12-18 provides a ligand contact to NAD(+); it reads GAAGQIG. Residues Arg-93 and Arg-99 each coordinate substrate. Residues Asn-106, Gln-113, and 130–132 contribute to the NAD(+) site; that span reads VGN. 2 residues coordinate substrate: Asn-132 and Arg-163. The Proton acceptor role is filled by His-188.

It belongs to the LDH/MDH superfamily. MDH type 2 family.

The catalysed reaction is (S)-malate + NAD(+) = oxaloacetate + NADH + H(+). Functionally, catalyzes the reversible oxidation of malate to oxaloacetate. In Legionella pneumophila subsp. pneumophila (strain Philadelphia 1 / ATCC 33152 / DSM 7513), this protein is Malate dehydrogenase.